The sequence spans 458 residues: tRNA-2-methylthio-N(6)-dimethylallyladenosine synthase (458 aa).

An MTTase N-terminal domain is found at 15 to 134 (KKVFIKTYGC…LPDLLEQTKQ (120 aa)). The [4Fe-4S] cluster site is built by Cys-24, Cys-60, Cys-97, Cys-175, Cys-179, and Cys-182. The region spanning 161–393 (RKRGVSAFLT…QVLLLEQQNA (233 aa)) is the Radical SAM core domain. The TRAM domain maps to 396–457 (RSKIGQTTDV…SNSFVGEMTN (62 aa)).

It belongs to the methylthiotransferase family. MiaB subfamily. In terms of assembly, monomer. [4Fe-4S] cluster is required as a cofactor.

The protein resides in the cytoplasm. It carries out the reaction N(6)-dimethylallyladenosine(37) in tRNA + (sulfur carrier)-SH + AH2 + 2 S-adenosyl-L-methionine = 2-methylsulfanyl-N(6)-dimethylallyladenosine(37) in tRNA + (sulfur carrier)-H + 5'-deoxyadenosine + L-methionine + A + S-adenosyl-L-homocysteine + 2 H(+). Its function is as follows. Catalyzes the methylthiolation of N6-(dimethylallyl)adenosine (i(6)A), leading to the formation of 2-methylthio-N6-(dimethylallyl)adenosine (ms(2)i(6)A) at position 37 in tRNAs that read codons beginning with uridine. The polypeptide is tRNA-2-methylthio-N(6)-dimethylallyladenosine synthase (Bartonella henselae (strain ATCC 49882 / DSM 28221 / CCUG 30454 / Houston 1) (Rochalimaea henselae)).